Consider the following 485-residue polypeptide: Glycogen synthase (485 aa).

Position 15 (Lys-15) interacts with ADP-alpha-D-glucose.

It belongs to the glycosyltransferase 1 family. Bacterial/plant glycogen synthase subfamily.

It catalyses the reaction [(1-&gt;4)-alpha-D-glucosyl](n) + ADP-alpha-D-glucose = [(1-&gt;4)-alpha-D-glucosyl](n+1) + ADP + H(+). It participates in glycan biosynthesis; glycogen biosynthesis. In terms of biological role, synthesizes alpha-1,4-glucan chains using ADP-glucose. The sequence is that of Glycogen synthase (glgA) from Geobacillus stearothermophilus (Bacillus stearothermophilus).